The primary structure comprises 421 residues: Acetate kinase (421 aa).

Asn-7 contributes to the Mg(2+) binding site. Lys-14 contributes to the ATP binding site. Arg-91 is a substrate binding site. The Proton donor/acceptor role is filled by Asp-148. ATP contacts are provided by residues 208–212 (HIGNG) and 283–285 (DRR). Glu-387 is a binding site for Mg(2+).

It belongs to the acetokinase family. As to quaternary structure, homodimer. Mg(2+) serves as cofactor. It depends on Mn(2+) as a cofactor.

The protein localises to the cytoplasm. It carries out the reaction acetate + ATP = acetyl phosphate + ADP. The protein operates within metabolic intermediate biosynthesis; acetyl-CoA biosynthesis; acetyl-CoA from acetate: step 1/2. Its function is as follows. Catalyzes the formation of acetyl phosphate from acetate and ATP. Can also catalyze the reverse reaction. This chain is Acetate kinase, found in Trichlorobacter lovleyi (strain ATCC BAA-1151 / DSM 17278 / SZ) (Geobacter lovleyi).